A 360-amino-acid chain; its full sequence is Secreted LysM effector LysM2 (360 aa).

The first 21 residues, 1-21 (MKISSLSILPLLGVVSAGIHG), serve as a signal peptide directing secretion. The LysM 1 domain maps to 37–85 (TWYLDLVDDSYTCENIESQWDLSHEAFVAWNPGVKKDCSGLKVGLSVCV). Residues 94–113 (ATPTSEASTSSETSSASPTA) show a composition bias toward low complexity. A disordered region spans residues 94 to 125 (ATPTSEASTSSETSSASPTASRPPLPSPTQDG). Asn-129 carries N-linked (GlcNAc...) asparagine glycosylation. The LysM 2 domain maps to 132–179 (KFHQAVSGDTCSKIISRYKPITLDQFIEWNPALEKDCSGLWSGYYYCV). Asn-204 carries an N-linked (GlcNAc...) asparagine glycan. 2 LysM domains span residues 225–272 (RWHK…YYCI) and 311–357 (KWHQ…YVCV).

It belongs to the secreted LysM effector family.

The protein resides in the secreted. Its subcellular location is the cell wall. Its function is as follows. Secreted effector that binds two substrates, chitin and N-linked oligosaccharides associated with human skin glycoproteins. Could provide the pathogen with three important functions including shielding host cell wall chitin from the human immune system, shielding the pathogen's glycoproteins from host degradation and immune surveillance, and helping facilitate pathogen adhesion to human skin. This Trichophyton rubrum (strain ATCC MYA-4607 / CBS 118892) (Athlete's foot fungus) protein is Secreted LysM effector LysM2.